The following is a 399-amino-acid chain: Argininosuccinate synthase (399 aa).

9-17 (AYSGGLDTS) lines the ATP pocket. Y85 contacts L-citrulline. G115 provides a ligand contact to ATP. Positions 117, 121, and 122 each coordinate L-aspartate. N121 contacts L-citrulline. The L-citrulline site is built by R125, S173, E258, and Y270.

Belongs to the argininosuccinate synthase family. Type 1 subfamily. In terms of assembly, homotetramer.

Its subcellular location is the cytoplasm. It catalyses the reaction L-citrulline + L-aspartate + ATP = 2-(N(omega)-L-arginino)succinate + AMP + diphosphate + H(+). Its pathway is amino-acid biosynthesis; L-arginine biosynthesis; L-arginine from L-ornithine and carbamoyl phosphate: step 2/3. This chain is Argininosuccinate synthase, found in Streptococcus uberis (strain ATCC BAA-854 / 0140J).